The following is a 126-amino-acid chain: Aspartate 1-decarboxylase (126 aa).

Ser25 serves as the catalytic Schiff-base intermediate with substrate; via pyruvic acid. The residue at position 25 (Ser25) is a Pyruvic acid (Ser). Thr57 contributes to the substrate binding site. Tyr58 acts as the Proton donor in catalysis. Gly73–Ala75 contacts substrate.

It belongs to the PanD family. In terms of assembly, heterooctamer of four alpha and four beta subunits. Pyruvate serves as cofactor. Post-translationally, is synthesized initially as an inactive proenzyme, which is activated by self-cleavage at a specific serine bond to produce a beta-subunit with a hydroxyl group at its C-terminus and an alpha-subunit with a pyruvoyl group at its N-terminus.

The protein resides in the cytoplasm. It carries out the reaction L-aspartate + H(+) = beta-alanine + CO2. The protein operates within cofactor biosynthesis; (R)-pantothenate biosynthesis; beta-alanine from L-aspartate: step 1/1. Functionally, catalyzes the pyruvoyl-dependent decarboxylation of aspartate to produce beta-alanine. The polypeptide is Aspartate 1-decarboxylase (Xanthomonas oryzae pv. oryzae (strain MAFF 311018)).